The sequence spans 146 residues: Large ribosomal subunit protein uL11 (146 aa).

Belongs to the universal ribosomal protein uL11 family. In terms of assembly, part of the ribosomal stalk of the 50S ribosomal subunit. Interacts with L10 and the large rRNA to form the base of the stalk. L10 forms an elongated spine to which L12 dimers bind in a sequential fashion forming a multimeric L10(L12)X complex. Post-translationally, one or more lysine residues are methylated.

Its function is as follows. Forms part of the ribosomal stalk which helps the ribosome interact with GTP-bound translation factors. The chain is Large ribosomal subunit protein uL11 from Corynebacterium kroppenstedtii (strain DSM 44385 / JCM 11950 / CIP 105744 / CCUG 35717).